A 558-amino-acid polypeptide reads, in one-letter code: Arginine--tRNA ligase (558 aa).

A 'HIGH' region motif is present at residues 119-129 (ANPDGPLHVGH).

This sequence belongs to the class-I aminoacyl-tRNA synthetase family.

It localises to the cytoplasm. It carries out the reaction tRNA(Arg) + L-arginine + ATP = L-arginyl-tRNA(Arg) + AMP + diphosphate. In Methanothrix thermoacetophila (strain DSM 6194 / JCM 14653 / NBRC 101360 / PT) (Methanosaeta thermophila), this protein is Arginine--tRNA ligase.